We begin with the raw amino-acid sequence, 147 residues long: MKLYELKPAPGSKKNRKRVGRGESSGHGKTSTRGHKGQWARSGGGVRPGFEGGQMPLTRRIPKRGFKNINKKVYTEVNVEKLERFDNDTVITPELLLKERVISKIEKDGVKILGRGELTKRLIVRVQKVSEGARKKIEASGGKVEVI.

The segment at Met1–Arg59 is disordered. Over residues Ser42–Gly52 the composition is skewed to gly residues.

It belongs to the universal ribosomal protein uL15 family. Part of the 50S ribosomal subunit.

Functionally, binds to the 23S rRNA. The chain is Large ribosomal subunit protein uL15 from Caldicellulosiruptor bescii (strain ATCC BAA-1888 / DSM 6725 / KCTC 15123 / Z-1320) (Anaerocellum thermophilum).